The chain runs to 482 residues: Catalase easC (482 aa).

His-58 is an active-site residue. Heme is bound at residue Tyr-347.

The protein belongs to the catalase family. It depends on heme as a cofactor.

The protein operates within alkaloid biosynthesis; ergot alkaloid biosynthesis. Its function is as follows. Catalase; part of the gene cluster that mediates the biosynthesis of fungal ergot alkaloid. DmaW catalyzes the first step of ergot alkaloid biosynthesis by condensing dimethylallyl diphosphate (DMAP) and tryptophan to form 4-dimethylallyl-L-tryptophan. The second step is catalyzed by the methyltransferase easF that methylates 4-dimethylallyl-L-tryptophan in the presence of S-adenosyl-L-methionine, resulting in the formation of 4-dimethylallyl-L-abrine. The catalase easC and the FAD-dependent oxidoreductase easE then transform 4-dimethylallyl-L-abrine to chanoclavine-I which is further oxidized by easD in the presence of NAD(+), resulting in the formation of chanoclavine-I aldehyde. Chanoclavine-I aldehyde is the precursor of ergoamides and ergopeptines in Clavicipitaceae, and clavine-type alcaloids such as fumiclavine in Trichocomaceae. However, the metabolites downstream of chanoclavine-I aldehyde in Arthrodermataceae have not been identified yet. This chain is Catalase easC, found in Arthroderma otae (strain ATCC MYA-4605 / CBS 113480) (Microsporum canis).